The following is a 661-amino-acid chain: Pumilio domain-containing protein C56F2.08c (661 aa).

Residues 1–74 (MLYVSNLPVG…GPVQVMLAKP (74 aa)) enclose the RRM domain. S102 bears the Phosphoserine mark. T104 carries the phosphothreonine modification. S105 bears the Phosphoserine mark. The PUM-HD domain maps to 129 to 482 (INLDIVDSMI…RLMEEVGMTS (354 aa)). Pumilio repeat units follow at residues 191 to 226 (SMLDDVAELSSDYLGNTVVQKFFEYCSDPIKEAMLE), 227 to 263 (RIAPYLAAIGIHKNGTWAAQKIIDVASTEKQMDLIVK), 264 to 302 (HLRPYTALLYFDQFGNYVAQCCLRFKYPKNTFLFEVMAR), and 374 to 410 (HLATHLHTTCTHKLASTLIFKLINNKQEPESRNLLLK). Residues S482, S486, S488, and S490 each carry the phosphoserine modification.

Its subcellular location is the cytoplasm. This Schizosaccharomyces pombe (strain 972 / ATCC 24843) (Fission yeast) protein is Pumilio domain-containing protein C56F2.08c.